Here is a 311-residue protein sequence, read N- to C-terminus: Aspartate carbamoyltransferase catalytic subunit (311 aa).

Carbamoyl phosphate contacts are provided by Arg-55 and Thr-56. Lys-85 serves as a coordination point for L-aspartate. Residues Arg-106, His-135, and Gln-138 each coordinate carbamoyl phosphate. L-aspartate-binding residues include Arg-168 and Arg-230. Carbamoyl phosphate contacts are provided by Leu-268 and Pro-269.

This sequence belongs to the aspartate/ornithine carbamoyltransferase superfamily. ATCase family. In terms of assembly, heterododecamer (2C3:3R2) of six catalytic PyrB chains organized as two trimers (C3), and six regulatory PyrI chains organized as three dimers (R2).

The enzyme catalyses carbamoyl phosphate + L-aspartate = N-carbamoyl-L-aspartate + phosphate + H(+). It functions in the pathway pyrimidine metabolism; UMP biosynthesis via de novo pathway; (S)-dihydroorotate from bicarbonate: step 2/3. Catalyzes the condensation of carbamoyl phosphate and aspartate to form carbamoyl aspartate and inorganic phosphate, the committed step in the de novo pyrimidine nucleotide biosynthesis pathway. The chain is Aspartate carbamoyltransferase catalytic subunit from Salmonella dublin (strain CT_02021853).